Consider the following 368-residue polypeptide: Aminomethyltransferase (368 aa).

Belongs to the GcvT family. The glycine cleavage system is composed of four proteins: P, T, L and H.

It catalyses the reaction N(6)-[(R)-S(8)-aminomethyldihydrolipoyl]-L-lysyl-[protein] + (6S)-5,6,7,8-tetrahydrofolate = N(6)-[(R)-dihydrolipoyl]-L-lysyl-[protein] + (6R)-5,10-methylene-5,6,7,8-tetrahydrofolate + NH4(+). The glycine cleavage system catalyzes the degradation of glycine. This Xylella fastidiosa (strain 9a5c) protein is Aminomethyltransferase.